Here is a 72-residue protein sequence, read N- to C-terminus: Large ribosomal subunit protein uL29 (72 aa).

Belongs to the universal ribosomal protein uL29 family.

This is Large ribosomal subunit protein uL29 from Thermus thermophilus (strain ATCC BAA-163 / DSM 7039 / HB27).